Here is a 196-residue protein sequence, read N- to C-terminus: ATP-dependent Clp protease proteolytic subunit (196 aa).

The active-site Nucleophile is serine 96. Residue histidine 121 is part of the active site.

The protein belongs to the peptidase S14 family. Fourteen ClpP subunits assemble into 2 heptameric rings which stack back to back to give a disk-like structure with a central cavity, resembling the structure of eukaryotic proteasomes.

It is found in the cytoplasm. The catalysed reaction is Hydrolysis of proteins to small peptides in the presence of ATP and magnesium. alpha-casein is the usual test substrate. In the absence of ATP, only oligopeptides shorter than five residues are hydrolyzed (such as succinyl-Leu-Tyr-|-NHMec, and Leu-Tyr-Leu-|-Tyr-Trp, in which cleavage of the -Tyr-|-Leu- and -Tyr-|-Trp bonds also occurs).. In terms of biological role, cleaves peptides in various proteins in a process that requires ATP hydrolysis. Has a chymotrypsin-like activity. Plays a major role in the degradation of misfolded proteins. In Streptococcus pyogenes serotype M3 (strain SSI-1), this protein is ATP-dependent Clp protease proteolytic subunit.